The chain runs to 790 residues: MIADDDEKWLAAAIAAVKQNAFYMQRAIDSNNLKDALKFSAQMLSELRTSKLSPHKYYELYMRVFNELGTLEIFFKEETGRGCSIAELYELVQHAGNILPRLYLLCTIGSVYIKSKDVTATDILKDLVEMCRAVQHPLRGLFLRSYLAQVTRDKLPSIGSDLEGDGDAHMNALEFVLQNFTEMNKLWVRMQHQGPSREKEKREKERNELRDLVGKNLHVLSQLEGVDLGIYRDTVLPRILEQVVNCKDELAQCYLMDCIIQVFPDDFHLQTLDVLLGACPQLQPSVDIKTVLSGLMERLSNYAASSVEALPNFLQVEAFSKLNYAIGKVVEAQADLPAAASVTLYLFLLKFTLHVYSDRLDYVDQVLGSCVTQLSATGKLCDDKAAKQIVAFLSAPLEKYNNVVTILKLTNYPLVMEYLDRETNKAMAIILVQSVFKNNTHIATADEVDALFELAKGLMKDFDGTIDDEIDEEDFQEEQNLVARLVNKLYIDDPEEMSKIIFTVRKHIVAGGPKRLPLTIPPLVFSALKLIRRLRGGDENPFGDDASATPKRILQLLSETVEVLSDVSAPDLALRLYLQCAQAANNCELETVAYEFFTKAYLLYEEEISDSKAQVTALRLIIGTLQRMRVFNVENRDTLTHKATGYSARLLRKPDQCRAVYECAHLFWADECENLKDGERVVLCLKRAQRIADAVQQMANASRGTSSTGSVSLYVELLNKYLYFLEKGNQQVTGDTIKSLAELIKSETKKVESGAEPFINSTLRYIEFQRQQEDGGMNEKYEKIKMEWFE.

Methionine 1 is subject to N-acetylmethionine.

The protein belongs to the VPS35 family. Component of the retromer complex which consists of VPS29 (MAG1), VPS26 (VPS26A or VPS26B), VPS35 (VPS35A or VPS35B or VPS35C), VPS5/17 (SNX1 or SNX2A or SNX2B). Component of a retromer subcomplex consisting of VPS29 (MAG1), VPS26 (VPS26A or VPS26B), VPS35 (VPS35A or VPS35B or VPS35C).

It localises to the cytoplasm. It is found in the endosome membrane. Its subcellular location is the prevacuolar compartment membrane. The protein localises to the golgi apparatus. The protein resides in the trans-Golgi network membrane. In terms of biological role, plays a role in vesicular protein sorting. Component of the membrane-associated retromer complex which is essential in endosome-to-Golgi retrograde transport. Also involved in the efficient sorting of seed storage proteins. The VPS29-VPS26-VPS35 subcomplex may be involved in recycling of specific cargos from endosome to the plasma membrane. This chain is Vacuolar protein sorting-associated protein 35C (VPS35C), found in Arabidopsis thaliana (Mouse-ear cress).